A 506-amino-acid polypeptide reads, in one-letter code: Maturase K (506 aa).

The protein belongs to the intron maturase 2 family. MatK subfamily.

The protein resides in the plastid. It is found in the chloroplast. In terms of biological role, usually encoded in the trnK tRNA gene intron. Probably assists in splicing its own and other chloroplast group II introns. The protein is Maturase K of Medicago truncatula (Barrel medic).